The primary structure comprises 119 residues: MFKKADRKEARERRHLRVRKKVFGTPERPRLSVYRSEKNIYAQIIDDVNAVTLVAASSLDKAIEVKGSNKEAAKLVGELVAKRAIEKGINDVVFDRGGYVYHGRVEALASGAREAGLKF.

The protein belongs to the universal ribosomal protein uL18 family. As to quaternary structure, part of the 50S ribosomal subunit; part of the 5S rRNA/L5/L18/L25 subcomplex. Contacts the 5S and 23S rRNAs.

Its function is as follows. This is one of the proteins that bind and probably mediate the attachment of the 5S RNA into the large ribosomal subunit, where it forms part of the central protuberance. This is Large ribosomal subunit protein uL18 from Clostridium perfringens (strain 13 / Type A).